We begin with the raw amino-acid sequence, 370 residues long: MKTLADVFREALKEKGISSIGTLSKRFRKSKNKLQDIAIEIVHGKGAVFRVPEKTAVAWDLNGNRVDGSYYAYAPLCMREKFEPVLTPEELREKLPDWPYFIIDLYHWDKHTQKEKGKICLQVNQSYGLLRDYFTGSELAVTWANEEFREMFHGPLDRITTYGGPTSEFLKENGINEVVLLDPWAEEVLSEKDFDVKAFIIGGIVDTGGNKKKTTPKIGEELESAGIKVRRRKIVLRGDVVGVPDRINRILGIILKMMVEGKSMDEAVYEMQEPLHARWRLRKELPKRATRYMVEGKVYRVVEKELFDEYSKWLKIRWEDFVKVLRELDLVALERKRIHHLNKISNARIINGKLHRVILLKRAAMLCYNC.

The 206-residue stretch at 87-292 (TPEELREKLP…KELPKRATRY (206 aa)) folds into the SAM-dependent MTase TRM10-type domain.

It belongs to the class IV-like SAM-binding methyltransferase superfamily. TRM10 family.

Its subcellular location is the cytoplasm. It catalyses the reaction adenosine(9) in tRNA + S-adenosyl-L-methionine = N(1)-methyladenosine(9) in tRNA + S-adenosyl-L-homocysteine + H(+). The enzyme catalyses guanosine(9) in tRNA + S-adenosyl-L-methionine = N(1)-methylguanosine(9) in tRNA + S-adenosyl-L-homocysteine + H(+). Its function is as follows. Catalyzes the S-adenosyl-L-methionine-dependent formation of either N(1)-methyladenine or N(1)-methylguanine at position 9 (m1A9 or m1G9) in tRNA. The protein is tRNA (guanine(9)-/adenine(9)-N1)-methyltransferase of Thermococcus kodakarensis (strain ATCC BAA-918 / JCM 12380 / KOD1) (Pyrococcus kodakaraensis (strain KOD1)).